The chain runs to 450 residues: UDP-N-acetylmuramoylalanine--D-glutamate ligase (450 aa).

119–125 (GSNGKTT) lines the ATP pocket.

Belongs to the MurCDEF family.

It is found in the cytoplasm. It catalyses the reaction UDP-N-acetyl-alpha-D-muramoyl-L-alanine + D-glutamate + ATP = UDP-N-acetyl-alpha-D-muramoyl-L-alanyl-D-glutamate + ADP + phosphate + H(+). It participates in cell wall biogenesis; peptidoglycan biosynthesis. Cell wall formation. Catalyzes the addition of glutamate to the nucleotide precursor UDP-N-acetylmuramoyl-L-alanine (UMA). This Bacillus cereus (strain B4264) protein is UDP-N-acetylmuramoylalanine--D-glutamate ligase.